The following is a 156-amino-acid chain: 6,7-dimethyl-8-ribityllumazine synthase (156 aa).

Residues Phe-24, 56-58, and 80-82 each bind 5-amino-6-(D-ribitylamino)uracil; these read SFE and AVV. 85 to 86 contacts (2S)-2-hydroxy-3-oxobutyl phosphate; sequence ET. The active-site Proton donor is His-88. Residue Phe-113 coordinates 5-amino-6-(D-ribitylamino)uracil. Arg-127 contacts (2S)-2-hydroxy-3-oxobutyl phosphate.

The protein belongs to the DMRL synthase family.

The catalysed reaction is (2S)-2-hydroxy-3-oxobutyl phosphate + 5-amino-6-(D-ribitylamino)uracil = 6,7-dimethyl-8-(1-D-ribityl)lumazine + phosphate + 2 H2O + H(+). It participates in cofactor biosynthesis; riboflavin biosynthesis; riboflavin from 2-hydroxy-3-oxobutyl phosphate and 5-amino-6-(D-ribitylamino)uracil: step 1/2. Its function is as follows. Catalyzes the formation of 6,7-dimethyl-8-ribityllumazine by condensation of 5-amino-6-(D-ribitylamino)uracil with 3,4-dihydroxy-2-butanone 4-phosphate. This is the penultimate step in the biosynthesis of riboflavin. This Thermococcus kodakarensis (strain ATCC BAA-918 / JCM 12380 / KOD1) (Pyrococcus kodakaraensis (strain KOD1)) protein is 6,7-dimethyl-8-ribityllumazine synthase.